The chain runs to 52 residues: ATP synthase F(1) complex subunit epsilon, mitochondrial (52 aa).

Residues Lys21, Lys32, and Lys37 each carry the N6-acetyllysine; alternate modification. An N6-succinyllysine; alternate mark is found at Lys21, Lys32, and Lys37. An N6-acetyllysine modification is found at Lys44.

It belongs to the eukaryotic ATPase epsilon family. Component of the ATP synthase complex composed at least of ATP5F1A/subunit alpha, ATP5F1B/subunit beta, ATP5MC1/subunit c (homooctomer), MT-ATP6/subunit a, MT-ATP8/subunit 8, ATP5ME/subunit e, ATP5MF/subunit f, ATP5MG/subunit g, ATP5MK/subunit k, ATP5MJ/subunit j, ATP5F1C/subunit gamma, ATP5F1D/subunit delta, ATP5F1E/subunit epsilon, ATP5PF/subunit F6, ATP5PB/subunit b, ATP5PD/subunit d, ATP5PO/subunit OSCP. ATP synthase complex consists of a soluble F(1) head domain (subunits alpha(3) and beta(3)) - the catalytic core - and a membrane F(0) domain - the membrane proton channel (subunits c, a, 8, e, f, g, k and j). These two domains are linked by a central stalk (subunits gamma, delta, and epsilon) rotating inside the F1 region and a stationary peripheral stalk (subunits F6, b, d, and OSCP).

It localises to the mitochondrion. The protein resides in the mitochondrion inner membrane. Functionally, subunit epsilon, of the mitochondrial membrane ATP synthase complex (F(1)F(0) ATP synthase or Complex V) that produces ATP from ADP in the presence of a proton gradient across the membrane which is generated by electron transport complexes of the respiratory chain. ATP synthase complex consist of a soluble F(1) head domain - the catalytic core - and a membrane F(1) domain - the membrane proton channel. These two domains are linked by a central stalk rotating inside the F(1) region and a stationary peripheral stalk. During catalysis, ATP synthesis in the catalytic domain of F(1) is coupled via a rotary mechanism of the central stalk subunits to proton translocation. In vivo, can only synthesize ATP although its ATP hydrolase activity can be activated artificially in vitro. May be essential for the assembly of F(1) and may play an important role in the incorporation of the hydrophobic subunit c into the F(1)-c oligomer rotor of the mitochondrial ATP synthase complex. The protein is ATP synthase F(1) complex subunit epsilon, mitochondrial of Mus musculus (Mouse).